A 220-amino-acid chain; its full sequence is RING-H2 finger protein ATL77 (220 aa).

The helical transmembrane segment at 53-73 (LMLLSILLCGIICSLGLHYII) threads the bilayer. Residues 130–172 (CVICLSDFVAGEQLRVLPKCNHGFHLRCIDKWLTQHMTCPKCR) form an RING-type; atypical zinc finger.

The protein belongs to the RING-type zinc finger family. ATL subfamily.

The protein resides in the membrane. The catalysed reaction is S-ubiquitinyl-[E2 ubiquitin-conjugating enzyme]-L-cysteine + [acceptor protein]-L-lysine = [E2 ubiquitin-conjugating enzyme]-L-cysteine + N(6)-ubiquitinyl-[acceptor protein]-L-lysine.. Its pathway is protein modification; protein ubiquitination. This is RING-H2 finger protein ATL77 (ATL77) from Arabidopsis thaliana (Mouse-ear cress).